The following is a 609-amino-acid chain: Glutamine--fructose-6-phosphate aminotransferase [isomerizing] (609 aa).

The active-site Nucleophile; for GATase activity is Cys2. The region spanning 2–218 is the Glutamine amidotransferase type-2 domain; it reads CGIVGAVAQR…EGDIAEVTRR (217 aa). 2 SIS domains span residues 286–426 and 458–599; these read AAKL…LKGV and LAED…VDQP. The For Fru-6P isomerization activity role is filled by Lys604.

Homodimer.

It is found in the cytoplasm. The catalysed reaction is D-fructose 6-phosphate + L-glutamine = D-glucosamine 6-phosphate + L-glutamate. Its function is as follows. Catalyzes the first step in hexosamine metabolism, converting fructose-6P into glucosamine-6P using glutamine as a nitrogen source. The chain is Glutamine--fructose-6-phosphate aminotransferase [isomerizing] from Photorhabdus laumondii subsp. laumondii (strain DSM 15139 / CIP 105565 / TT01) (Photorhabdus luminescens subsp. laumondii).